The chain runs to 315 residues: CAAX prenyl protease 2 (315 aa).

Over 1 to 3 (MLQ) the chain is Lumenal. Residues 4-23 (FSTFLVLLYISISYVLPLYA) form a helical membrane-spanning segment. Over 24 to 44 (TSQPEGSKRDNPRTIKSRMQK) the chain is Cytoplasmic. A helical membrane pass occupies residues 45–65 (LTIMLISNLFLVPFLQSQLSS). The Lumenal portion of the chain corresponds to 66–74 (TTSHISFKD). Residues 75 to 95 (AFLGLGIIPGYYAALPNPWQF) traverse the membrane as a helical segment. Over 96–105 (SQFVKDLTKC) the chain is Cytoplasmic. The chain crosses the membrane as a helical span at residues 106-126 (VAMLLTLYCGPVLDFVLYHLL). At 127 to 148 (NPKSSILEDFYHEFLNIWSFRN) the chain is on the lumenal side. Residues 149–169 (FIFAPITEEIFYTSMLLTTYL) traverse the membrane as a helical segment. Active-site proton donor/acceptor residues include Glu156 and His194. Over 170–208 (NLIPHSQLSYQQLFWQPSLFFGLAHAHHAYEQLQEGSMT) the chain is Cytoplasmic. Residues 209–229 (TVSILLTTCFQILYTTLFGGL) traverse the membrane as a helical segment. Residues 230-237 (TKFVFVRT) are Lumenal-facing. Residues 238–258 (GGNLWCCIILHALCNIMGFPG) form a helical membrane-spanning segment. The Cytoplasmic segment spans residues 259–275 (PSRLNLHFTVVDKKAGR). The helical transmembrane segment at 276 to 296 (ISKLVSIWNKCYFALLVLGLI) threads the bilayer. At 297-315 (SLKDTLQTLVGTPGYRITL) the chain is on the lumenal side.

It belongs to the peptidase U48 family.

The protein resides in the endoplasmic reticulum membrane. The enzyme catalyses Hydrolyzes the peptide bond -P2-(S-farnesyl or geranylgeranyl)C-P1'-P2'-P3'-COOH where P1' and P2' are amino acids with aliphatic sidechains and P3' is any C-terminal residue.. Functionally, protease involved in the processing of a variety of prenylated proteins containing the C-terminal CAAX motif, where C is a cysteine modified with an isoprenoid lipid, A is an aliphatic amino acid and X is any C-terminal amino acid. Proteolytically removes the C-terminal three residues of farnesylated proteins, leaving the prenylated cysteine as the new C-terminus. Target proteins include the a-factor mating pheromone and RAS. Its substrate specificity is overlapping but distinct with that of STE24. This is CAAX prenyl protease 2 (RCE1) from Saccharomyces cerevisiae (strain ATCC 204508 / S288c) (Baker's yeast).